The sequence spans 267 residues: MFMQKFRAAATSNRSTLCIGLDPDLARLPEHLPRDAAGIVQFNQAIIEATSDLVCAYKPNMAFYEALGSAGWLALKQTIASIPSHIPVLLDAKRGDIGSTAQAYASAAFDELGVDAITLSPYMGYDSLQPFLERADKTCFILCRTSNPGGDDVQNLLLDNGEPLFLKIAELVAKRWNSNHNCGLVVGATYPAEIATIHQRYPELPLLVPGVGSQGGDIEEVLAAAGEQAIINVSRSVLYASGGSSFAEAARKVAQAFLVPKQALNHP.

Lysine 93 serves as the catalytic Proton donor.

It belongs to the OMP decarboxylase family. Type 2 subfamily.

The enzyme catalyses orotidine 5'-phosphate + H(+) = UMP + CO2. Its pathway is pyrimidine metabolism; UMP biosynthesis via de novo pathway; UMP from orotate: step 2/2. This Herpetosiphon aurantiacus (strain ATCC 23779 / DSM 785 / 114-95) protein is Orotidine 5'-phosphate decarboxylase.